The sequence spans 485 residues: NADH-quinone oxidoreductase subunit N (485 aa).

14 helical membrane-spanning segments follow: residues 8-28 (LIAL…MLGI), 35-55 (FINA…LYFV), 78-98 (GLVI…LVGY), 104-124 (EFYL…SANH), 125-145 (LASL…LVGY), 159-179 (YMLL…LLYA), 203-223 (VLAG…LVPF), 235-255 (PAPV…AVVM), 271-291 (MVLS…AISQ), 297-317 (LLGY…IAVQ), 327-347 (GVYL…VSLM), 374-394 (AVMT…GFIG), 408-427 (WWLT…YYLR), and 449-469 (ALTA…LLGV).

The protein belongs to the complex I subunit 2 family. As to quaternary structure, NDH-1 is composed of 13 different subunits. Subunits NuoA, H, J, K, L, M, N constitute the membrane sector of the complex.

It localises to the cell inner membrane. It carries out the reaction a quinone + NADH + 5 H(+)(in) = a quinol + NAD(+) + 4 H(+)(out). Functionally, NDH-1 shuttles electrons from NADH, via FMN and iron-sulfur (Fe-S) centers, to quinones in the respiratory chain. The immediate electron acceptor for the enzyme in this species is believed to be ubiquinone. Couples the redox reaction to proton translocation (for every two electrons transferred, four hydrogen ions are translocated across the cytoplasmic membrane), and thus conserves the redox energy in a proton gradient. In Serratia proteamaculans (strain 568), this protein is NADH-quinone oxidoreductase subunit N.